The chain runs to 246 residues: Pyridoxine 5'-phosphate synthase (246 aa).

Asn10 lines the 3-amino-2-oxopropyl phosphate pocket. 12–13 (DH) is a 1-deoxy-D-xylulose 5-phosphate binding site. A 3-amino-2-oxopropyl phosphate-binding site is contributed by Arg21. Residue His46 is the Proton acceptor of the active site. Arg48 and His53 together coordinate 1-deoxy-D-xylulose 5-phosphate. The active-site Proton acceptor is the Glu73. Thr103 is a 1-deoxy-D-xylulose 5-phosphate binding site. His193 acts as the Proton donor in catalysis. 3-amino-2-oxopropyl phosphate is bound by residues Gly194 and 215-216 (GH).

This sequence belongs to the PNP synthase family. As to quaternary structure, homooctamer; tetramer of dimers.

It is found in the cytoplasm. The enzyme catalyses 3-amino-2-oxopropyl phosphate + 1-deoxy-D-xylulose 5-phosphate = pyridoxine 5'-phosphate + phosphate + 2 H2O + H(+). The protein operates within cofactor biosynthesis; pyridoxine 5'-phosphate biosynthesis; pyridoxine 5'-phosphate from D-erythrose 4-phosphate: step 5/5. Its function is as follows. Catalyzes the complicated ring closure reaction between the two acyclic compounds 1-deoxy-D-xylulose-5-phosphate (DXP) and 3-amino-2-oxopropyl phosphate (1-amino-acetone-3-phosphate or AAP) to form pyridoxine 5'-phosphate (PNP) and inorganic phosphate. In Rhodopirellula baltica (strain DSM 10527 / NCIMB 13988 / SH1), this protein is Pyridoxine 5'-phosphate synthase.